The primary structure comprises 247 residues: Fibroblast growth factor 14 (247 aa).

Disordered stretches follow at residues 1 to 38 (MAAA…KNRG) and 214 to 247 (VGET…SKTT). Residues 15–25 (QAREQHWDRPS) are compositionally biased toward basic and acidic residues.

It belongs to the heparin-binding growth factors family. Interacts with SCN8A. As to expression, nervous system.

It localises to the nucleus. Probably involved in nervous system development and function. The polypeptide is Fibroblast growth factor 14 (FGF14) (Homo sapiens (Human)).